Consider the following 186-residue polypeptide: Signal peptidase I (186 aa).

At 1–19 (MTEEKSTNKKNSLFEWVKA) the chain is on the cytoplasmic side. The chain crosses the membrane as a helical span at residues 20-40 (IIIAVVLALLIRAFLFEPYLV). The Extracellular portion of the chain corresponds to 41–186 (EGTSMDPTLH…FPFNEIRKTD (146 aa)). Active-site residues include Ser44 and Lys86.

Belongs to the peptidase S26 family.

Its subcellular location is the cell membrane. It carries out the reaction Cleavage of hydrophobic, N-terminal signal or leader sequences from secreted and periplasmic proteins.. The protein is Signal peptidase I (lepB) of Bacillus licheniformis.